The sequence spans 87 residues: RNA-binding protein Hfq (87 aa).

The Sm domain maps to D9–V68.

It belongs to the Hfq family. In terms of assembly, homohexamer.

Functionally, RNA chaperone that binds small regulatory RNA (sRNAs) and mRNAs to facilitate mRNA translational regulation in response to envelope stress, environmental stress and changes in metabolite concentrations. Also binds with high specificity to tRNAs. The protein is RNA-binding protein Hfq of Teredinibacter turnerae (strain ATCC 39867 / T7901).